The sequence spans 248 residues: DCN1-like protein 4 (248 aa).

Residues 1–35 (MPRGKRRAADTISDNMDHGQPKRARTSYTSIPTQQ) are disordered. Polar residues predominate over residues 26-35 (TSYTSIPTQQ). The 189-residue stretch at 47-235 (FSQKRCMAWF…MLDEFVEWLR (189 aa)) folds into the DCUN1 domain.

It localises to the nucleus. Functionally, inhibits neddylation of cullin components of SCF-type E3 ubiquitin ligase complexes and thus regulates SCF-type complex activity. Essential for development. Function inhibits cell proliferation and cell growth. This chain is DCN1-like protein 4, found in Drosophila melanogaster (Fruit fly).